A 357-amino-acid chain; its full sequence is Prostaglandin D2 receptor (357 aa).

The Extracellular portion of the chain corresponds to 1 to 20; that stretch reads MNESYRCQTSTWVERGSSAT. Asn2 carries an N-linked (GlcNAc...) asparagine glycan. Residues 21–41 traverse the membrane as a helical segment; sequence MGAVLFGAGLLGNLLALVLLA. The Cytoplasmic portion of the chain corresponds to 42-58; the sequence is RSGLGSCRPGPLHPPPS. Residues 59–79 traverse the membrane as a helical segment; the sequence is VFYVLVCGLTVTDLLGKCLIS. Residues 80 to 106 lie on the Extracellular side of the membrane; that stretch reads PMVLAAYAQNQSLKELLPASGNQLCET. A glycan (N-linked (GlcNAc...) asparagine) is linked at Asn89. The cysteines at positions 104 and 182 are disulfide-linked. A helical transmembrane segment spans residues 107-127; sequence FAFLMSFFGLASTLQLLAMAV. The Cytoplasmic segment spans residues 128–149; that stretch reads ECWLSLGHPFFYQRHVTLRRGV. The helical transmembrane segment at 150–170 threads the bilayer; it reads LVAPVVAAFCLAFCALPFAGF. At 171–194 the chain is on the extracellular side; that stretch reads GKFVQYCPGTWCFIQMIHKERSFS. A helical membrane pass occupies residues 195 to 215; sequence VIGFSVLYSSLMALLVLATVV. The Cytoplasmic segment spans residues 216–261; it reads CNLGAMYNLYDMHRRQRHYPHRCSRDRAQSGSDYRHGSLHPLEELD. A helical membrane pass occupies residues 262–282; sequence HFVLLALMTVLFTMCSLPLIY. Over 283 to 306 the chain is Extracellular; sequence RAYYGAFKLENKAEGDSEDLQALR. The helical transmembrane segment at 307–327 threads the bilayer; the sequence is FLSVISIVDPWIFIIFRTSVF. At 328–357 the chain is on the cytoplasmic side; sequence RMLFHKVFTRPLIYRNWSSHSQQSNVESTL.

Belongs to the G-protein coupled receptor 1 family. Most abundantly expressed in the ileum, followed by lung, stomach and uterus.

Its subcellular location is the cell membrane. Its function is as follows. Receptor for prostaglandin D2 (PGD2). The activity of this receptor is mainly mediated by G(s) proteins that stimulate adenylate cyclase, resulting in an elevation of intracellular cAMP. A mobilization of calcium is also observed, but without formation of inositol 1,4,5-trisphosphate. Involved in PLA2G3-dependent maturation of mast cells. PLA2G3 is secreted by immature mast cells and acts on nearby fibroblasts upstream to PTDGS to synthesize PGD2, which in turn promotes mast cell maturation and degranulation via PTGDR. This chain is Prostaglandin D2 receptor (Ptgdr), found in Mus musculus (Mouse).